Consider the following 497-residue polypeptide: Probable gamma-aminobutyrate transaminase 2, mitochondrial (497 aa).

Residues 1–37 (MNLIKHAAFAASFQGETDCTSHASARKFSTSGSSPLL) constitute a mitochondrion transit peptide. Residue 153–154 (GS) coordinates pyridoxal 5'-phosphate. Tyr186 is a substrate binding site. Asp293 contributes to the pyridoxal 5'-phosphate binding site. Lys322 contacts substrate. An N6-(pyridoxal phosphate)lysine modification is found at Lys322.

The protein belongs to the class-III pyridoxal-phosphate-dependent aminotransferase family.

The protein resides in the mitochondrion. It catalyses the reaction 4-aminobutanoate + pyruvate = succinate semialdehyde + L-alanine. The catalysed reaction is 4-aminobutanoate + glyoxylate = succinate semialdehyde + glycine. Its function is as follows. Transaminase that degrades gamma-amino butyric acid (GABA). In Oryza sativa subsp. indica (Rice), this protein is Probable gamma-aminobutyrate transaminase 2, mitochondrial.